The primary structure comprises 287 residues: Pantothenate synthetase (287 aa).

30–37 (MGNLHSGH) provides a ligand contact to ATP. Catalysis depends on His-37, which acts as the Proton donor. Gln-61 lines the (R)-pantoate pocket. Gln-61 lines the beta-alanine pocket. 149–152 (GEKD) is a binding site for ATP. Gln-155 contacts (R)-pantoate. Residues Val-178 and 186-189 (LSSR) contribute to the ATP site.

This sequence belongs to the pantothenate synthetase family. As to quaternary structure, homodimer.

It localises to the cytoplasm. The catalysed reaction is (R)-pantoate + beta-alanine + ATP = (R)-pantothenate + AMP + diphosphate + H(+). The protein operates within cofactor biosynthesis; (R)-pantothenate biosynthesis; (R)-pantothenate from (R)-pantoate and beta-alanine: step 1/1. Catalyzes the condensation of pantoate with beta-alanine in an ATP-dependent reaction via a pantoyl-adenylate intermediate. In Pseudomonas putida (strain W619), this protein is Pantothenate synthetase.